Here is a 642-residue protein sequence, read N- to C-terminus: Threonine--tRNA ligase (642 aa).

One can recognise a TGS domain in the interval 1-61 (MPVITLPDGS…ETDAELSIIT (61 aa)). Residues 243 to 534 (DHRKIGKQLD…LIEEYAGRFP (292 aa)) are catalytic. Zn(2+) contacts are provided by C334, H385, and H511.

This sequence belongs to the class-II aminoacyl-tRNA synthetase family. As to quaternary structure, homodimer. Zn(2+) is required as a cofactor.

The protein resides in the cytoplasm. The catalysed reaction is tRNA(Thr) + L-threonine + ATP = L-threonyl-tRNA(Thr) + AMP + diphosphate + H(+). Functionally, catalyzes the attachment of threonine to tRNA(Thr) in a two-step reaction: L-threonine is first activated by ATP to form Thr-AMP and then transferred to the acceptor end of tRNA(Thr). Also edits incorrectly charged L-seryl-tRNA(Thr). The chain is Threonine--tRNA ligase from Shewanella baltica (strain OS195).